Consider the following 569-residue polypeptide: Carboxylesterase 3 (569 aa).

Positions 1–24 (MRLHRLRARLNAVAFGLLLLLVHG) are cleaved as a signal peptide. An intrachain disulfide couples Cys95 to Cys122. Asn103 carries an N-linked (GlcNAc...) asparagine glycan. Ser227 functions as the Acyl-ester intermediate in the catalytic mechanism. Residues Cys279 and Cys290 are joined by a disulfide bond. Catalysis depends on charge relay system residues Glu345 and His458. A Prevents secretion from ER motif is present at residues 566–569 (QEDL).

The protein belongs to the type-B carboxylesterase/lipase family. N-glycosylated.

It is found in the endoplasmic reticulum lumen. The enzyme catalyses a carboxylic ester + H2O = an alcohol + a carboxylate + H(+). In terms of biological role, involved in the detoxification of xenobiotics and in the activation of ester and amide prodrugs. This Pongo abelii (Sumatran orangutan) protein is Carboxylesterase 3 (CES3).